Consider the following 553-residue polypeptide: Dihydroxy-acid dehydratase (553 aa).

D78 lines the Mg(2+) pocket. A [2Fe-2S] cluster-binding site is contributed by C119. 2 residues coordinate Mg(2+): D120 and K121. K121 is subject to N6-carboxylysine. Residue C191 participates in [2Fe-2S] cluster binding. Residue E444 coordinates Mg(2+). S470 acts as the Proton acceptor in catalysis.

This sequence belongs to the IlvD/Edd family. In terms of assembly, homodimer. [2Fe-2S] cluster serves as cofactor. Requires Mg(2+) as cofactor.

The enzyme catalyses (2R)-2,3-dihydroxy-3-methylbutanoate = 3-methyl-2-oxobutanoate + H2O. It carries out the reaction (2R,3R)-2,3-dihydroxy-3-methylpentanoate = (S)-3-methyl-2-oxopentanoate + H2O. Its pathway is amino-acid biosynthesis; L-isoleucine biosynthesis; L-isoleucine from 2-oxobutanoate: step 3/4. It functions in the pathway amino-acid biosynthesis; L-valine biosynthesis; L-valine from pyruvate: step 3/4. Functionally, functions in the biosynthesis of branched-chain amino acids. Catalyzes the dehydration of (2R,3R)-2,3-dihydroxy-3-methylpentanoate (2,3-dihydroxy-3-methylvalerate) into 2-oxo-3-methylpentanoate (2-oxo-3-methylvalerate) and of (2R)-2,3-dihydroxy-3-methylbutanoate (2,3-dihydroxyisovalerate) into 2-oxo-3-methylbutanoate (2-oxoisovalerate), the penultimate precursor to L-isoleucine and L-valine, respectively. The polypeptide is Dihydroxy-acid dehydratase (Methanococcoides burtonii (strain DSM 6242 / NBRC 107633 / OCM 468 / ACE-M)).